Reading from the N-terminus, the 64-residue chain is Small ribosomal subunit protein bS21 (64 aa).

Belongs to the bacterial ribosomal protein bS21 family.

This chain is Small ribosomal subunit protein bS21, found in Flavobacterium johnsoniae (strain ATCC 17061 / DSM 2064 / JCM 8514 / BCRC 14874 / CCUG 350202 / NBRC 14942 / NCIMB 11054 / UW101) (Cytophaga johnsonae).